We begin with the raw amino-acid sequence, 400 residues long: UDP-glucuronate:glycolipid 2-beta-glucuronosyltransferase (400 aa).

Catalysis depends on Asp-157, which acts as the Proton acceptor. UDP-alpha-D-glucuronate contacts are provided by residues 230–231 (SM), 272–273 (EM), Tyr-292, and 306–310 (MKLLQ). The interval 377-400 (PETRLYPHPPTAAPQLSSEAALSH) is disordered. Residues 390–400 (PQLSSEAALSH) are compositionally biased toward polar residues.

This sequence belongs to the glycosyltransferase 70 family.

It is found in the cell inner membrane. It carries out the reaction alpha-D-Man-(1-&gt;3)-beta-D-Glc-(1-&gt;4)-alpha-D-Glc-1-di-trans,octa-cis-undecaprenyl diphosphate + UDP-alpha-D-glucuronate = beta-D-GlcA-(1-&gt;2)-alpha-D-Man-(1-&gt;3)-beta-D-Glc-(1-&gt;4)-alpha-D-Glc-di-trans,octa-cis-undecaprenyl diphosphate + UDP + H(+). It participates in glycan biosynthesis; xanthan biosynthesis. Catalyzes the transfer of a glucuronic acid (GlcA) residue from UDP-glucuronate to mannose-alpha-1,3-glucose-beta-1,4-glucose-P-P-polyisoprenyl to form the lipid-linked tetrasaccharide GlcA-Man-Glc(2)-PP-Pol, with a glucuronic acid-beta-mannose linkage. Is involved in the biosynthesis of the exopolysaccharide xanthan, since it catalyzes the fourth glycosylation step in the assembly of the pentasaccharide-P-P-polyisoprenyl repeating unit of xanthan. Is unable to use the trisaccharide acceptor freed from the pyrophosphate lipid moiety. Does not show specificity for the lipidic portion of the acceptor. Shows diminished activity when tested with 6-O-acetyl-mannose-alpha-1,3-glucose-beta-1,4-glucose-P-P-polyisoprenyl, a putative intermediate in the synthesis of xanthan; this could indicate that acetylation of the internal mannose takes place after the formation of the GumK product. The chain is UDP-glucuronate:glycolipid 2-beta-glucuronosyltransferase (gumK) from Xanthomonas campestris pv. campestris.